The chain runs to 205 residues: Small ribosomal subunit protein uS4 (205 aa).

The tract at residues 1-44 (MSKRHSQKYKIDRRMGENLWGRPKSPVNSRSYGPGQHGQRRKTK) is disordered. Residues 94-173 (SRLDAIVYRC…LPEYIDLDAK (80 aa)) enclose the S4 RNA-binding domain.

Belongs to the universal ribosomal protein uS4 family. Part of the 30S ribosomal subunit. Contacts protein S5. The interaction surface between S4 and S5 is involved in control of translational fidelity.

Functionally, one of the primary rRNA binding proteins, it binds directly to 16S rRNA where it nucleates assembly of the body of the 30S subunit. In terms of biological role, with S5 and S12 plays an important role in translational accuracy. This is Small ribosomal subunit protein uS4 from Maricaulis maris (strain MCS10) (Caulobacter maris).